We begin with the raw amino-acid sequence, 664 residues long: Phosphomethylpyrimidine synthase (664 aa).

Substrate is bound by residues N235, M264, Y293, H329, 349 to 351 (SRG), 390 to 393 (DGMR), and E429. Residue H433 coordinates Zn(2+). Y456 contacts substrate. H497 serves as a coordination point for Zn(2+). Residues C577, C580, and C585 each contribute to the [4Fe-4S] cluster site.

It belongs to the ThiC family. Homodimer. Requires [4Fe-4S] cluster as cofactor.

The enzyme catalyses 5-amino-1-(5-phospho-beta-D-ribosyl)imidazole + S-adenosyl-L-methionine = 4-amino-2-methyl-5-(phosphooxymethyl)pyrimidine + CO + 5'-deoxyadenosine + formate + L-methionine + 3 H(+). The protein operates within cofactor biosynthesis; thiamine diphosphate biosynthesis. Its function is as follows. Catalyzes the synthesis of the hydroxymethylpyrimidine phosphate (HMP-P) moiety of thiamine from aminoimidazole ribotide (AIR) in a radical S-adenosyl-L-methionine (SAM)-dependent reaction. This chain is Phosphomethylpyrimidine synthase, found in Shewanella amazonensis (strain ATCC BAA-1098 / SB2B).